Consider the following 396-residue polypeptide: S-adenosylmethionine synthase (396 aa).

H16 provides a ligand contact to ATP. D18 contributes to the Mg(2+) binding site. E44 is a binding site for K(+). E57 and Q100 together coordinate L-methionine. The interval 100–110 (QSPDINQGVDR) is flexible loop. Residues 165–167 (DAK), D240, 246–247 (RK), A263, and K267 contribute to the ATP site. L-methionine is bound at residue D240. K271 provides a ligand contact to L-methionine.

This sequence belongs to the AdoMet synthase family. As to quaternary structure, homotetramer; dimer of dimers. The cofactor is Mg(2+). K(+) serves as cofactor.

The protein resides in the cytoplasm. The catalysed reaction is L-methionine + ATP + H2O = S-adenosyl-L-methionine + phosphate + diphosphate. Its pathway is amino-acid biosynthesis; S-adenosyl-L-methionine biosynthesis; S-adenosyl-L-methionine from L-methionine: step 1/1. Its function is as follows. Catalyzes the formation of S-adenosylmethionine (AdoMet) from methionine and ATP. The overall synthetic reaction is composed of two sequential steps, AdoMet formation and the subsequent tripolyphosphate hydrolysis which occurs prior to release of AdoMet from the enzyme. The sequence is that of S-adenosylmethionine synthase from Pseudomonas fluorescens (strain SBW25).